An 80-amino-acid chain; its full sequence is MSQEAILEKVRSIVAEQLSVDAGEVKPESNFQNDLGADSLDTVELVMALEEAFDIEIPDEAAEGITTVGDAVKYIEDKQA.

The Carrier domain maps to Glu4 to Gln79. Ser39 carries the O-(pantetheine 4'-phosphoryl)serine modification.

The protein belongs to the acyl carrier protein (ACP) family. In terms of processing, 4'-phosphopantetheine is transferred from CoA to a specific serine of apo-ACP by AcpS. This modification is essential for activity because fatty acids are bound in thioester linkage to the sulfhydryl of the prosthetic group.

The protein resides in the cytoplasm. Its pathway is lipid metabolism; fatty acid biosynthesis. In terms of biological role, carrier of the growing fatty acid chain in fatty acid biosynthesis. In Parasynechococcus marenigrum (strain WH8102), this protein is Acyl carrier protein.